The following is a 340-amino-acid chain: Beta-D-galactofuranosidase xynD (340 aa).

Residues 1 to 24 (MKHHNYYPSTCLSILPFLLPLTMS) form the signal peptide. The Proton acceptor role is filled by aspartate 51. N-linked (GlcNAc...) asparagine glycans are attached at residues asparagine 96 and asparagine 165. Glutamate 222 functions as the Proton donor in the catalytic mechanism. 2 N-linked (GlcNAc...) asparagine glycosylation sites follow: asparagine 302 and asparagine 328.

Belongs to the glycosyl hydrolase 43 family.

It is found in the secreted. Its pathway is glycan degradation. Its function is as follows. Glycoside hydrolase family 43 beta-D-galactofuranosidase involved in the degradation of beta-galactofuranoside (Galf)-containing glycans such as galactomannan or O-glycans. Is not active on beta-1,5- or beta-1,6-linked beta-D-galactofuranose (Galf) residues. This chain is Beta-D-galactofuranosidase xynD, found in Aspergillus niger (strain ATCC MYA-4892 / CBS 513.88 / FGSC A1513).